The following is a 451-amino-acid chain: tRNA modification GTPase MnmE (451 aa).

(6S)-5-formyl-5,6,7,8-tetrahydrofolate-binding residues include Arg-37, Glu-95, and Lys-135. The TrmE-type G domain maps to 232–376 (GLSIVIMGPP…LVEAIADFAG (145 aa)). Residue Asn-242 coordinates K(+). Residues 242 to 247 (NAGKST), 261 to 267 (SEIAGTT), and 286 to 289 (DTAG) contribute to the GTP site. Ser-246 serves as a coordination point for Mg(2+). Residues Ser-261, Ile-263, and Thr-266 each contribute to the K(+) site. Thr-267 is a Mg(2+) binding site. Lys-451 is a (6S)-5-formyl-5,6,7,8-tetrahydrofolate binding site.

It belongs to the TRAFAC class TrmE-Era-EngA-EngB-Septin-like GTPase superfamily. TrmE GTPase family. In terms of assembly, homodimer. Heterotetramer of two MnmE and two MnmG subunits. Requires K(+) as cofactor.

The protein resides in the cytoplasm. Its function is as follows. Exhibits a very high intrinsic GTPase hydrolysis rate. Involved in the addition of a carboxymethylaminomethyl (cmnm) group at the wobble position (U34) of certain tRNAs, forming tRNA-cmnm(5)s(2)U34. The polypeptide is tRNA modification GTPase MnmE (Beijerinckia indica subsp. indica (strain ATCC 9039 / DSM 1715 / NCIMB 8712)).